The sequence spans 476 residues: DnaJ homolog subfamily C member 7 homolog (476 aa).

The tract at residues 1–22 (MTEVETTHMNAGTESQQEPAEL) is disordered. Residues 7–18 (THMNAGTESQQE) are compositionally biased toward polar residues. TPR repeat units follow at residues 23-56 (AEKQ…GSDS), 59-92 (AIYY…KPDV), 143-176 (MSWM…NPKN), 177-210 (VEAL…DPDC), 223-256 (LENT…DPDN), 261-294 (AKLY…DSSY), and 295-328 (LKGL…DASD). The 66-residue stretch at 349-414 (DHYKILGVSK…ESRRRFDSGV (66 aa)) folds into the J domain.

It is found in the cytoplasm. The chain is DnaJ homolog subfamily C member 7 homolog from Schizosaccharomyces pombe (strain 972 / ATCC 24843) (Fission yeast).